A 240-amino-acid polypeptide reads, in one-letter code: Small ribosomal subunit protein eS4 (240 aa).

The region spanning 37-99 (VPLVVLLRDV…RGEFFRVFPD (63 aa)) is the S4 RNA-binding domain.

The protein belongs to the eukaryotic ribosomal protein eS4 family.

The protein is Small ribosomal subunit protein eS4 of Halorubrum lacusprofundi (strain ATCC 49239 / DSM 5036 / JCM 8891 / ACAM 34).